Consider the following 518-residue polypeptide: Triacylglycerol lipase OBL1 (518 aa).

The chain crosses the membrane as a helical span at residues 93–113 (GFVVDFFLNLFSANGGFFGLL). A GXSXG motif is present at residues 337–341 (GHSLG). Ser-339 acts as the Nucleophile in catalysis. Active-site charge relay system residues include Asp-403 and His-496.

It belongs to the AB hydrolase superfamily. Lipase family. As to expression, expressed in pollen grains, pollen tubes, developing embryos, developing seeds and germinating seeds.

Its subcellular location is the lipid droplet. It is found in the membrane. It carries out the reaction 1,2-di-(9Z-octadecenoyl)-glycerol + (9Z)-octadecenoate + H(+) = 1,2,3-tri-(9Z-octadecenoyl)-glycerol + H2O. The catalysed reaction is 1-(9Z-octadecenoyl)-glycerol + H2O = glycerol + (9Z)-octadecenoate + H(+). In terms of biological role, acid lipase that can hydrolyze a range of triacylglycerols without a clear preference for acyl-chains. Can also cleave 1,2-diacylglycerol, 1,3-diacylglycerol and 1-monoacylglycerol, but not phosphatidylcholine, phosphatidylethanolamine, or sterol esters. Required for pollen tube growth. Triacylglycerol hydrolysis by OBL1 may provide acyl groups for the synthesis of membrane lipids in growing pollen tubes. In Arabidopsis thaliana (Mouse-ear cress), this protein is Triacylglycerol lipase OBL1.